The primary structure comprises 139 residues: Endoribonuclease YbeY (139 aa).

Positions 105, 109, and 115 each coordinate Zn(2+).

The protein belongs to the endoribonuclease YbeY family. Requires Zn(2+) as cofactor.

It is found in the cytoplasm. In terms of biological role, single strand-specific metallo-endoribonuclease involved in late-stage 70S ribosome quality control and in maturation of the 3' terminus of the 16S rRNA. In Flavobacterium johnsoniae (strain ATCC 17061 / DSM 2064 / JCM 8514 / BCRC 14874 / CCUG 350202 / NBRC 14942 / NCIMB 11054 / UW101) (Cytophaga johnsonae), this protein is Endoribonuclease YbeY.